A 170-amino-acid chain; its full sequence is Lipoprotein signal peptidase (170 aa).

Transmembrane regions (helical) follow at residues 13–33, 72–92, 96–113, 116–136, and 142–162; these read IFISILVFFDQWSKYLVVTYV, LFFLIIPIIILVFVFSFSLKE, VSRFALILILSGGIGNII, LFRPLGVVDFLDVKFFGIFGL, and FNFADSYVVVGMIVFIIYDLF. Residues aspartate 124 and aspartate 146 contribute to the active site.

The protein belongs to the peptidase A8 family.

The protein localises to the cell inner membrane. The enzyme catalyses Release of signal peptides from bacterial membrane prolipoproteins. Hydrolyzes -Xaa-Yaa-Zaa-|-(S,diacylglyceryl)Cys-, in which Xaa is hydrophobic (preferably Leu), and Yaa (Ala or Ser) and Zaa (Gly or Ala) have small, neutral side chains.. It functions in the pathway protein modification; lipoprotein biosynthesis (signal peptide cleavage). Its function is as follows. This protein specifically catalyzes the removal of signal peptides from prolipoproteins. The sequence is that of Lipoprotein signal peptidase from Borrelia duttonii (strain Ly).